The following is a 396-amino-acid chain: Elongation factor Tu 2 (396 aa).

Residues 10-206 form the tr-type G domain; it reads KLHVNVGTIG…ALDTFIPDPT (197 aa). The interval 19–26 is G1; that stretch reads GHVDHGKT. 19 to 26 is a GTP binding site; sequence GHVDHGKT. Thr-26 lines the Mg(2+) pocket. The interval 60–64 is G2; sequence GITIS. The tract at residues 81–84 is G3; sequence DCPG. Residues 81–85 and 136–139 contribute to the GTP site; these read DCPGH and NKAD. Residues 136-139 form a G4 region; it reads NKAD. Residues 174-176 are G5; the sequence is SAR.

Belongs to the TRAFAC class translation factor GTPase superfamily. Classic translation factor GTPase family. EF-Tu/EF-1A subfamily. Monomer.

Its subcellular location is the cytoplasm. It catalyses the reaction GTP + H2O = GDP + phosphate + H(+). Functionally, GTP hydrolase that promotes the GTP-dependent binding of aminoacyl-tRNA to the A-site of ribosomes during protein biosynthesis. The chain is Elongation factor Tu 2 from Xanthomonas campestris pv. campestris (strain 8004).